A 424-amino-acid polypeptide reads, in one-letter code: MAKKMSSLIIIFNILLLLTTQTHAHNVTRLLANHPSFSSFSHFLTQTHLADEINRRRTITVCAVDNAAMSALTSKGYTLSTLKNILSLHVLLDYFGTKKLHQIRDGSALAATLFQATGAAPGTSGFVNITDLRGGKVGFGPDGGDLSSFFVKSIEEVPYNISIIQISRVLPSETAAAPTPAPAEMNLTGIMSAHGCKVFAETLLTNPGASKTYQESLEGGMTVFCPGDDAMKGFLPKYKNLTAPKKEAFLDFLAVPTYYSMAMLKSNNGPMNTLATDGANKFELTVQNDGEKVTLKTRINTVKIVDTLIDEQPLAIYATDKVLLPKELFKASAVEAPAPAPAPEDGDVADSPKAAKGKAKGKKKKAAPSPDNDPFGDSDSPAEGPDGEADDATADDAGAVRIIGGAKAGLVVSLLCLFASSWLL.

Residues methionine 1–alanine 24 form the signal peptide. FAS1 domains lie at histidine 25–leucine 170 and glutamate 184–leucine 323. N-linked (GlcNAc...) asparagine glycans are attached at residues asparagine 26, asparagine 128, asparagine 160, asparagine 186, and asparagine 240. Positions alanine 338–threonine 393 are disordered. Over residues alanine 355–alanine 366 the composition is skewed to basic residues. Aspartate 396 carries GPI-anchor amidated aspartate lipidation. A propeptide spans alanine 397–leucine 424 (removed in mature form).

The protein belongs to the fasciclin-like AGP family. In terms of tissue distribution, preferentially expressed in flowers.

It localises to the secreted. Its subcellular location is the extracellular space. The protein localises to the apoplast. It is found in the cell membrane. Its function is as follows. May be a cell surface adhesion protein. The protein is Fasciclin-like arabinogalactan protein 1 (FLA1) of Arabidopsis thaliana (Mouse-ear cress).